A 209-amino-acid chain; its full sequence is Guanylate kinase (209 aa).

One can recognise a Guanylate kinase-like domain in the interval 9 to 188 (GIMLVISSPS…SVHQIKCIFT (180 aa)). Residue 16 to 23 (SPSGGGKT) participates in ATP binding.

The protein belongs to the guanylate kinase family.

Its subcellular location is the cytoplasm. The catalysed reaction is GMP + ATP = GDP + ADP. Essential for recycling GMP and indirectly, cGMP. The polypeptide is Guanylate kinase (Ehrlichia canis (strain Jake)).